A 63-amino-acid chain; its full sequence is MARRCEICNKGVVAGVQYSHSHRQSKRTWAPNIKKVKAIVKGTPKTVHVCTRCLRSGKVQRAI.

The protein belongs to the bacterial ribosomal protein bL28 family.

The polypeptide is Large ribosomal subunit protein bL28 (Clostridium perfringens (strain ATCC 13124 / DSM 756 / JCM 1290 / NCIMB 6125 / NCTC 8237 / Type A)).